A 150-amino-acid polypeptide reads, in one-letter code: Large ribosomal subunit protein uL15 (150 aa).

The disordered stretch occupies residues 1 to 57 (MTIKLESLQSNKGSRRKKMRKGRGIAAGQGASCGFGMRGQKSRSGRPTRPGFEGGQM). Basic residues predominate over residues 13–23 (GSRRKKMRKGR). A compositionally biased stretch (gly residues) spans 25-37 (IAAGQGASCGFGM).

It belongs to the universal ribosomal protein uL15 family. As to quaternary structure, part of the 50S ribosomal subunit.

Binds to the 23S rRNA. In Prochlorococcus marinus (strain NATL1A), this protein is Large ribosomal subunit protein uL15.